Here is a 93-residue protein sequence, read N- to C-terminus: Small ribosomal subunit protein uS19m (93 aa).

The protein belongs to the universal ribosomal protein uS19 family.

It is found in the mitochondrion. The protein is Small ribosomal subunit protein uS19m (RPS19) of Marchantia polymorpha (Common liverwort).